Here is a 354-residue protein sequence, read N- to C-terminus: Probable dual-specificity RNA methyltransferase RlmN (354 aa).

The active-site Proton acceptor is the glutamate 94. One can recognise a Radical SAM core domain in the interval 103–332 (GRRRNTACLS…QEAGLEAAIR (230 aa)). Cysteine 110 and cysteine 343 are joined by a disulfide. Cysteine 117, cysteine 121, and cysteine 124 together coordinate [4Fe-4S] cluster. Residues 169–170 (GE), serine 201, 224–226 (SLH), and asparagine 300 each bind S-adenosyl-L-methionine. The active-site S-methylcysteine intermediate is cysteine 343.

It belongs to the radical SAM superfamily. RlmN family. Requires [4Fe-4S] cluster as cofactor.

The protein localises to the cytoplasm. The catalysed reaction is adenosine(2503) in 23S rRNA + 2 reduced [2Fe-2S]-[ferredoxin] + 2 S-adenosyl-L-methionine = 2-methyladenosine(2503) in 23S rRNA + 5'-deoxyadenosine + L-methionine + 2 oxidized [2Fe-2S]-[ferredoxin] + S-adenosyl-L-homocysteine. The enzyme catalyses adenosine(37) in tRNA + 2 reduced [2Fe-2S]-[ferredoxin] + 2 S-adenosyl-L-methionine = 2-methyladenosine(37) in tRNA + 5'-deoxyadenosine + L-methionine + 2 oxidized [2Fe-2S]-[ferredoxin] + S-adenosyl-L-homocysteine. Its function is as follows. Specifically methylates position 2 of adenine 2503 in 23S rRNA and position 2 of adenine 37 in tRNAs. This is Probable dual-specificity RNA methyltransferase RlmN from Moorella thermoacetica (strain ATCC 39073 / JCM 9320).